The following is a 305-amino-acid chain: Glycine--tRNA ligase alpha subunit (305 aa).

Belongs to the class-II aminoacyl-tRNA synthetase family. In terms of assembly, tetramer of two alpha and two beta subunits.

It localises to the cytoplasm. The enzyme catalyses tRNA(Gly) + glycine + ATP = glycyl-tRNA(Gly) + AMP + diphosphate. This is Glycine--tRNA ligase alpha subunit from Streptococcus uberis (strain ATCC BAA-854 / 0140J).